We begin with the raw amino-acid sequence, 843 residues long: Urease (843 aa).

The Urease domain occupies 400 to 843; it reads GGIDCHVHFI…VPLSRNYFLF (444 aa). Residues His-405, His-407, and Lys-488 each coordinate Ni(2+). Residue Lys-488 is modified to N6-carboxylysine. His-490 serves as a coordination point for substrate. Ni(2+) is bound by residues His-517 and His-543. His-591 serves as the catalytic Proton donor. Asp-631 is a binding site for Ni(2+).

This sequence in the C-terminal section; belongs to the metallo-dependent hydrolases superfamily. Urease alpha subunit family. Homohexamer. Other oligomeric forms may exist depending on pH and presence of salts. Ni(2+) serves as cofactor. In terms of processing, carboxylation allows a single lysine to coordinate two nickel ions.

The catalysed reaction is urea + 2 H2O + H(+) = hydrogencarbonate + 2 NH4(+). The protein operates within nitrogen metabolism; urea degradation; CO(2) and NH(3) from urea (urease route): step 1/1. Its function is as follows. Urea hydrolase involved in nitrogen recycling from ureide, purine, and arginine catabolism. This chain is Urease, found in Oryza sativa subsp. indica (Rice).